Consider the following 208-residue polypeptide: Large ribosomal subunit protein uL3 (208 aa).

Residue Gln149 is modified to N5-methylglutamine.

This sequence belongs to the universal ribosomal protein uL3 family. As to quaternary structure, part of the 50S ribosomal subunit. Forms a cluster with proteins L14 and L19. Methylated by PrmB.

Its function is as follows. One of the primary rRNA binding proteins, it binds directly near the 3'-end of the 23S rRNA, where it nucleates assembly of the 50S subunit. This Histophilus somni (strain 129Pt) (Haemophilus somnus) protein is Large ribosomal subunit protein uL3.